We begin with the raw amino-acid sequence, 373 residues long: 3 beta-hydroxysteroid dehydrogenase/Delta 5--&gt;4-isomerase type 1 (373 aa).

Residues 10 to 15 (GAGGFV), Tyr155, and Lys159 contribute to the NADP(+) site. Lys159 functions as the Proton donor in the catalytic mechanism. A helical transmembrane segment spans residues 288-308 (LPLLYWLAFLLETVSFLLRPF).

It belongs to the 3-beta-HSD family. In terms of tissue distribution, adrenal glands, kidney, testes and ovaries.

It is found in the endoplasmic reticulum membrane. The protein localises to the mitochondrion membrane. It carries out the reaction a 3beta-hydroxy-Delta(5)-steroid + NAD(+) = a 3-oxo-Delta(5)-steroid + NADH + H(+). It catalyses the reaction pregnenolone + NAD(+) = pregn-5-ene-3,20-dione + NADH + H(+). The catalysed reaction is 3beta-hydroxyandrost-5-en-17-one + NAD(+) = androst-5-ene-3,17-dione + NADH + H(+). The enzyme catalyses androst-5-en-3beta,17beta-diol + NAD(+) = 17beta-hydroxy-androst-5-en-3-one + NADH + H(+). It carries out the reaction a 3beta-hydroxysteroid + NADP(+) = a 3-oxosteroid + NADPH + H(+). It catalyses the reaction 5alpha-androstane-3beta,17beta-diol + NADP(+) = 17beta-hydroxy-5alpha-androstan-3-one + NADPH + H(+). The catalysed reaction is 3beta-hydroxy-5alpha-androstan-17-one + NADP(+) = 5alpha-androstan-3,17-dione + NADPH + H(+). The enzyme catalyses a 3-oxo-Delta(5)-steroid = a 3-oxo-Delta(4)-steroid. It carries out the reaction pregn-5-ene-3,20-dione = progesterone. It catalyses the reaction androst-5-ene-3,17-dione = androst-4-ene-3,17-dione. The catalysed reaction is 17beta-hydroxy-androst-5-en-3-one = testosterone. The enzyme catalyses 5alpha-androstane-3beta,17beta-diol + NAD(+) = 17beta-hydroxy-5alpha-androstan-3-one + NADH + H(+). The protein operates within steroid hormone biosynthesis. It participates in steroid metabolism. Functionally, a bifunctional enzyme responsible for the oxidation and isomerization of 3beta-hydroxy-Delta(5)-steroid precursors to 3-oxo-Delta(4)-steroids, an essential step in steroid hormone biosynthesis. Specifically catalyzes the conversion of pregnenolone to progesterone, dehydroepiandrosterone (DHEA) to 4-androstenedione, and androstenediol to testosterone. Additionally, catalyzes the interconversion between 3beta-hydroxy and 3-oxo-5alpha-androstane steroids controlling the bioavalability of the active forms. Specifically converts dihydrotestosterone to its inactive form 5alpha-androstanediol, that does not bind androgen receptor/AR. Also converts androstanedione, a precursor of testosterone and estrone, to epiandrosterone. Expected to use NAD(+) as preferred electron donor for the 3beta-hydroxy-steroid dehydrogenase activity and NADPH for the 3-ketosteroid reductase activity. This chain is 3 beta-hydroxysteroid dehydrogenase/Delta 5--&gt;4-isomerase type 1, found in Rattus norvegicus (Rat).